Consider the following 233-residue polypeptide: Pyridoxine 5'-phosphate synthase (233 aa).

Position 6 (N6) interacts with 3-amino-2-oxopropyl phosphate. 8-9 contributes to the 1-deoxy-D-xylulose 5-phosphate binding site; it reads DH. Residue R17 participates in 3-amino-2-oxopropyl phosphate binding. H42 acts as the Proton acceptor in catalysis. Residues R44 and H49 each coordinate 1-deoxy-D-xylulose 5-phosphate. Residue E69 is the Proton acceptor of the active site. 1-deoxy-D-xylulose 5-phosphate is bound at residue T99. H186 acts as the Proton donor in catalysis. Residues G187 and 208–209 each bind 3-amino-2-oxopropyl phosphate; that span reads GH.

It belongs to the PNP synthase family. In terms of assembly, homooctamer; tetramer of dimers.

The protein resides in the cytoplasm. It carries out the reaction 3-amino-2-oxopropyl phosphate + 1-deoxy-D-xylulose 5-phosphate = pyridoxine 5'-phosphate + phosphate + 2 H2O + H(+). Its pathway is cofactor biosynthesis; pyridoxine 5'-phosphate biosynthesis; pyridoxine 5'-phosphate from D-erythrose 4-phosphate: step 5/5. Catalyzes the complicated ring closure reaction between the two acyclic compounds 1-deoxy-D-xylulose-5-phosphate (DXP) and 3-amino-2-oxopropyl phosphate (1-amino-acetone-3-phosphate or AAP) to form pyridoxine 5'-phosphate (PNP) and inorganic phosphate. The sequence is that of Pyridoxine 5'-phosphate synthase from Anaplasma phagocytophilum (strain HZ).